Reading from the N-terminus, the 324-residue chain is tRNA N6-adenosine threonylcarbamoyltransferase (324 aa).

Fe cation-binding residues include His-107, His-111, and Tyr-127. Residues Tyr-127–Gly-131, Asp-159, Gly-172, Glu-176, and Asn-257 contribute to the substrate site. Asp-285 is a binding site for Fe cation.

Belongs to the KAE1 / TsaD family. In terms of assembly, monomer. Component of the KEOPS complex that consists of Kae1, Bud32, Cgi121 and Pcc1; the whole complex dimerizes. Fe(2+) is required as a cofactor.

It is found in the cytoplasm. It catalyses the reaction L-threonylcarbamoyladenylate + adenosine(37) in tRNA = N(6)-L-threonylcarbamoyladenosine(37) in tRNA + AMP + H(+). Its function is as follows. Required for the formation of a threonylcarbamoyl group on adenosine at position 37 (t(6)A37) in tRNAs that read codons beginning with adenine. Is a component of the KEOPS complex that is probably involved in the transfer of the threonylcarbamoyl moiety of threonylcarbamoyl-AMP (TC-AMP) to the N6 group of A37. Kae1 likely plays a direct catalytic role in this reaction, but requires other protein(s) of the complex to fulfill this activity. This is tRNA N6-adenosine threonylcarbamoyltransferase from Pyrococcus furiosus (strain ATCC 43587 / DSM 3638 / JCM 8422 / Vc1).